A 914-amino-acid chain; its full sequence is Protein GAMETE EXPRESSED 2 (914 aa).

Filamin repeat units follow at residues 249–382 (IGYC…IKEV) and 391–485 (ACSV…DVNV). Residues 893–913 (LVVVPFSFFSIKLFSLLMVLI) form a helical membrane-spanning segment.

As to expression, in tricellular pollen, expressed in mature sperm cells but not in the vegetative cell. In bicellular pollen, detected in the progenitor generative cell. Detected in the egg cell within the female gametophyte.

The protein localises to the cell membrane. This is Protein GAMETE EXPRESSED 2 (GEX2) from Arabidopsis thaliana (Mouse-ear cress).